A 359-amino-acid chain; its full sequence is DNA replication and repair protein RecF (359 aa).

30–37 (GQNAQGKT) lines the ATP pocket.

The protein belongs to the RecF family.

Its subcellular location is the cytoplasm. Its function is as follows. The RecF protein is involved in DNA metabolism; it is required for DNA replication and normal SOS inducibility. RecF binds preferentially to single-stranded, linear DNA. It also seems to bind ATP. This Lactococcus lactis subsp. cremoris (strain SK11) protein is DNA replication and repair protein RecF.